The primary structure comprises 387 residues: Chorismate synthase (387 aa).

Arg39 and Arg45 together coordinate NADP(+). Residues 130–132 (RSS), 251–252 (NA), Gly295, 310–314 (KPIPT), and Arg336 contribute to the FMN site.

It belongs to the chorismate synthase family. As to quaternary structure, homotetramer. Requires FMNH2 as cofactor.

The enzyme catalyses 5-O-(1-carboxyvinyl)-3-phosphoshikimate = chorismate + phosphate. Its pathway is metabolic intermediate biosynthesis; chorismate biosynthesis; chorismate from D-erythrose 4-phosphate and phosphoenolpyruvate: step 7/7. Catalyzes the anti-1,4-elimination of the C-3 phosphate and the C-6 proR hydrogen from 5-enolpyruvylshikimate-3-phosphate (EPSP) to yield chorismate, which is the branch point compound that serves as the starting substrate for the three terminal pathways of aromatic amino acid biosynthesis. This reaction introduces a second double bond into the aromatic ring system. The chain is Chorismate synthase from Exiguobacterium sp. (strain ATCC BAA-1283 / AT1b).